Reading from the N-terminus, the 166-residue chain is Interferon gamma (166 aa).

The first 23 residues, 1–23 (MKYTSYILALQLCVLLGFSGSYG), serve as a signal peptide directing secretion. Gln24 is modified (pyrrolidone carboxylic acid). N-linked (GlcNAc...) asparagine glycosylation is found at Asn39 and Asn106.

This sequence belongs to the type II (or gamma) interferon family. As to quaternary structure, homodimer. Interacts with IFNGR1 (via extracellular domain); this interaction promotes IFNGR1 dimerization. As to expression, released primarily from activated T lymphocytes.

Its subcellular location is the secreted. Type II interferon produced by immune cells such as T-cells and NK cells that plays crucial roles in antimicrobial, antiviral, and antitumor responses by activating effector immune cells and enhancing antigen presentation. Primarily signals through the JAK-STAT pathway after interaction with its receptor IFNGR1 to affect gene regulation. Upon IFNG binding, IFNGR1 intracellular domain opens out to allow association of downstream signaling components JAK2, JAK1 and STAT1, leading to STAT1 activation, nuclear translocation and transcription of IFNG-regulated genes. Many of the induced genes are transcription factors such as IRF1 that are able to further drive regulation of a next wave of transcription. Plays a role in class I antigen presentation pathway by inducing a replacement of catalytic proteasome subunits with immunoproteasome subunits. In turn, increases the quantity, quality, and repertoire of peptides for class I MHC loading. Increases the efficiency of peptide generation also by inducing the expression of activator PA28 that associates with the proteasome and alters its proteolytic cleavage preference. Up-regulates as well MHC II complexes on the cell surface by promoting expression of several key molecules such as cathepsins B/CTSB, H/CTSH, and L/CTSL. Participates in the regulation of hematopoietic stem cells during development and under homeostatic conditions by affecting their development, quiescence, and differentiation. The protein is Interferon gamma (IFNG) of Cervus elaphus (Red deer).